Consider the following 170-residue polypeptide: Large ribosomal subunit protein uL10 (170 aa).

Belongs to the universal ribosomal protein uL10 family. In terms of assembly, part of the ribosomal stalk of the 50S ribosomal subunit. The N-terminus interacts with L11 and the large rRNA to form the base of the stalk. The C-terminus forms an elongated spine to which L12 dimers bind in a sequential fashion forming a multimeric L10(L12)X complex.

Forms part of the ribosomal stalk, playing a central role in the interaction of the ribosome with GTP-bound translation factors. This chain is Large ribosomal subunit protein uL10, found in Chlamydia felis (strain Fe/C-56) (Chlamydophila felis).